The chain runs to 236 residues: Probable methylthioribulose-1-phosphate dehydratase (236 aa).

The interval 1-29 (MQNVQQPKKRKLSDEIIAEDEDYQRDPEH) is disordered. Substrate is bound at residue C103. The Zn(2+) site is built by H121, H123, and H201.

It belongs to the aldolase class II family. MtnB subfamily. Requires Zn(2+) as cofactor.

The protein localises to the cytoplasm. The catalysed reaction is 5-(methylsulfanyl)-D-ribulose 1-phosphate = 5-methylsulfanyl-2,3-dioxopentyl phosphate + H2O. It participates in amino-acid biosynthesis; L-methionine biosynthesis via salvage pathway; L-methionine from S-methyl-5-thio-alpha-D-ribose 1-phosphate: step 2/6. Catalyzes the dehydration of methylthioribulose-1-phosphate (MTRu-1-P) into 2,3-diketo-5-methylthiopentyl-1-phosphate (DK-MTP-1-P). This Trichoplax adhaerens (Trichoplax reptans) protein is Probable methylthioribulose-1-phosphate dehydratase.